Here is a 470-residue protein sequence, read N- to C-terminus: Cysteine--tRNA ligase (470 aa).

A Zn(2+)-binding site is contributed by Cys46. Residues 48-58 (PTVYDLAHIGN) carry the 'HIGH' region motif. 3 residues coordinate Zn(2+): Cys230, His255, and Glu259. The short motif at 288–292 (KMSKS) is the 'KMSKS' region element. Lys291 contacts ATP.

The protein belongs to the class-I aminoacyl-tRNA synthetase family. In terms of assembly, monomer. It depends on Zn(2+) as a cofactor.

It is found in the cytoplasm. The catalysed reaction is tRNA(Cys) + L-cysteine + ATP = L-cysteinyl-tRNA(Cys) + AMP + diphosphate. The protein is Cysteine--tRNA ligase of Granulibacter bethesdensis (strain ATCC BAA-1260 / CGDNIH1).